Reading from the N-terminus, the 92-residue chain is Acylphosphatase (92 aa).

An Acylphosphatase-like domain is found at 6–92; the sequence is RAHVYVSGRV…EGVDGFEIRR (87 aa). Active-site residues include Arg-21 and Asn-39.

Belongs to the acylphosphatase family.

It catalyses the reaction an acyl phosphate + H2O = a carboxylate + phosphate + H(+). In Natronomonas pharaonis (strain ATCC 35678 / DSM 2160 / CIP 103997 / JCM 8858 / NBRC 14720 / NCIMB 2260 / Gabara) (Halobacterium pharaonis), this protein is Acylphosphatase (acyP).